Here is a 422-residue protein sequence, read N- to C-terminus: Phosphoribosylamine--glycine ligase (422 aa).

Positions 107–312 constitute an ATP-grasp domain; the sequence is KDVMAAAGVR…LGQLLHAAAT (206 aa). An ATP-binding site is contributed by 137–193; sequence GPPAGDPAWVVKDDRLAAGKGVVVTADRDVARAHGAALLEAGHPVLLESYLDGPEVS. Residues Glu-282 and Asn-284 each coordinate Mg(2+).

This sequence belongs to the GARS family. Mg(2+) serves as cofactor. The cofactor is Mn(2+).

It catalyses the reaction 5-phospho-beta-D-ribosylamine + glycine + ATP = N(1)-(5-phospho-beta-D-ribosyl)glycinamide + ADP + phosphate + H(+). The protein operates within purine metabolism; IMP biosynthesis via de novo pathway; N(1)-(5-phospho-D-ribosyl)glycinamide from 5-phospho-alpha-D-ribose 1-diphosphate: step 2/2. The sequence is that of Phosphoribosylamine--glycine ligase from Mycobacterium bovis (strain ATCC BAA-935 / AF2122/97).